The following is a 574-amino-acid chain: Urease subunit alpha (574 aa).

The Urease domain maps to 131 to 574 (GAIDSHIHFI…LPMAQRYLLI (444 aa)). Ni(2+) contacts are provided by His-136, His-138, and Lys-219. Lys-219 carries the N6-carboxylysine modification. His-221 contacts substrate. Residues His-248 and His-274 each coordinate Ni(2+). Residue His-322 is the Proton donor of the active site. Asp-362 is a binding site for Ni(2+).

Belongs to the metallo-dependent hydrolases superfamily. Urease alpha subunit family. Heterotrimer of UreA (gamma), UreB (beta) and UreC (alpha) subunits. Three heterotrimers associate to form the active enzyme. Ni cation is required as a cofactor. Post-translationally, carboxylation allows a single lysine to coordinate two nickel ions.

It localises to the cytoplasm. It catalyses the reaction urea + 2 H2O + H(+) = hydrogencarbonate + 2 NH4(+). It functions in the pathway nitrogen metabolism; urea degradation; CO(2) and NH(3) from urea (urease route): step 1/1. The chain is Urease subunit alpha from Prochlorococcus marinus (strain MIT 9303).